A 122-amino-acid polypeptide reads, in one-letter code: Small ribosomal subunit protein uS13 (122 aa).

Positions Pro97 to Lys122 are disordered.

It belongs to the universal ribosomal protein uS13 family. As to quaternary structure, part of the 30S ribosomal subunit. Forms a loose heterodimer with protein S19. Forms two bridges to the 50S subunit in the 70S ribosome.

In terms of biological role, located at the top of the head of the 30S subunit, it contacts several helices of the 16S rRNA. In the 70S ribosome it contacts the 23S rRNA (bridge B1a) and protein L5 of the 50S subunit (bridge B1b), connecting the 2 subunits; these bridges are implicated in subunit movement. Contacts the tRNAs in the A and P-sites. The polypeptide is Small ribosomal subunit protein uS13 (Geobacter sp. (strain M21)).